The chain runs to 469 residues: Dihydroorotate dehydrogenase (quinone), mitochondrial (469 aa).

The transit peptide at 1-37 (MSSSAAALAWRRSLRDALLRGSAWRGAPAANSAAARL) directs the protein to the mitochondrion. A helical transmembrane segment spans residues 62–82 (LLTGAMIGLAIAGGAYVSTAD). Residues 150 to 154 (AGFDK) and S174 each bind FMN. K154 is a substrate binding site. 199-203 (NRCGF) lines the substrate pocket. The disordered stretch occupies residues 219–247 (HGKRKMEETSSSTSPTTSDVKQGGKAGPG). Residues 227–236 (TSSSTSPTTS) show a composition bias toward low complexity. Residues N252 and N283 each coordinate FMN. 283 to 288 (NVSSPN) is a substrate binding site. Residue S286 is the Nucleophile of the active site. FMN contacts are provided by K328 and S356. 357-358 (NT) lines the substrate pocket. FMN-binding positions include G380, G409, and 430 to 431 (YT).

The protein belongs to the dihydroorotate dehydrogenase family. Type 2 subfamily. FMN is required as a cofactor.

The protein resides in the mitochondrion inner membrane. The enzyme catalyses (S)-dihydroorotate + a quinone = orotate + a quinol. It participates in pyrimidine metabolism; UMP biosynthesis via de novo pathway; orotate from (S)-dihydroorotate (quinone route): step 1/1. Its function is as follows. Catalyzes the conversion of dihydroorotate to orotate with quinone as electron acceptor. This chain is Dihydroorotate dehydrogenase (quinone), mitochondrial (PYRD), found in Oryza sativa subsp. japonica (Rice).